Here is an 882-residue protein sequence, read N- to C-terminus: Alanine--tRNA ligase (882 aa).

Zn(2+) is bound by residues H574, H578, C682, and H686. The tract at residues 853-882 is disordered; it reads GGRGGGKGALAQGGGLDPRKAREALPGLLP. Residues 854–868 are compositionally biased toward gly residues; the sequence is GRGGGKGALAQGGGL.

This sequence belongs to the class-II aminoacyl-tRNA synthetase family. Zn(2+) serves as cofactor.

The protein localises to the cytoplasm. It catalyses the reaction tRNA(Ala) + L-alanine + ATP = L-alanyl-tRNA(Ala) + AMP + diphosphate. Catalyzes the attachment of alanine to tRNA(Ala) in a two-step reaction: alanine is first activated by ATP to form Ala-AMP and then transferred to the acceptor end of tRNA(Ala). Also edits incorrectly charged Ser-tRNA(Ala) and Gly-tRNA(Ala) via its editing domain. This is Alanine--tRNA ligase from Thermus thermophilus (strain ATCC 27634 / DSM 579 / HB8).